Consider the following 486-residue polypeptide: Arginine/agmatine antiporter (486 aa).

The next 12 helical transmembrane spans lie at Leu12–Ser32, Ala41–Ala61, Gly85–Gly105, Asn129–Leu149, Ile160–Ala180, Ser211–Ala231, Ala242–Phe262, Val296–Ile316, Leu341–Thr361, Met367–Phe387, Leu418–Leu438, and Glu461–Thr481.

This sequence belongs to the amino acid-polyamine-organocation (APC) superfamily. Basic amino acid/polyamine antiporter (APA) (TC 2.A.3.2) family.

It is found in the cell inner membrane. Functionally, catalyzes the exchange of L-arginine for agmatine. The arginine uptake by the bacterium in the macrophage may be a virulence factor against the host innate immune response. This is Arginine/agmatine antiporter (aaxC) from Chlamydia caviae (strain ATCC VR-813 / DSM 19441 / 03DC25 / GPIC) (Chlamydophila caviae).